A 208-amino-acid chain; its full sequence is Ribosomal RNA small subunit methyltransferase G (208 aa).

S-adenosyl-L-methionine is bound by residues glycine 76, leucine 81, 127–128 (VE), and arginine 142.

This sequence belongs to the methyltransferase superfamily. RNA methyltransferase RsmG family.

It is found in the cytoplasm. It catalyses the reaction guanosine(527) in 16S rRNA + S-adenosyl-L-methionine = N(7)-methylguanosine(527) in 16S rRNA + S-adenosyl-L-homocysteine. Specifically methylates the N7 position of guanine in position 527 of 16S rRNA. This Legionella pneumophila (strain Corby) protein is Ribosomal RNA small subunit methyltransferase G.